The following is a 283-amino-acid chain: Acetylglutamate kinase (283 aa).

Residues 64–65 (GG), arginine 86, and asparagine 178 each bind substrate.

It belongs to the acetylglutamate kinase family. ArgB subfamily.

It localises to the cytoplasm. It catalyses the reaction N-acetyl-L-glutamate + ATP = N-acetyl-L-glutamyl 5-phosphate + ADP. It participates in amino-acid biosynthesis; L-arginine biosynthesis; N(2)-acetyl-L-ornithine from L-glutamate: step 2/4. In terms of biological role, catalyzes the ATP-dependent phosphorylation of N-acetyl-L-glutamate. This is Acetylglutamate kinase from Lactococcus lactis subsp. lactis (strain IL1403) (Streptococcus lactis).